We begin with the raw amino-acid sequence, 157 residues long: MSGVAGGASKKSSSRTMATKKLIIDEFKRRLRDNIKSLNDNFFHIIQAAKVNPDDNAYKNQTGKMTEFYTTKNEMAVRAQLMVRASDELLKLTADLKEFLILHDFHFLTHNIKQAEAQCEETLRQQSHQHNCLDSEVSNILFDLEREIAENFYLRHT.

This sequence belongs to the Mediator complex subunit 22 family. As to quaternary structure, component of the Mediator complex.

It localises to the nucleus. In terms of biological role, component of the Mediator complex, a coactivator involved in the regulated transcription of nearly all RNA polymerase II-dependent genes. Mediator functions as a bridge to convey information from gene-specific regulatory proteins to the basal RNA polymerase II transcription machinery. Mediator is recruited to promoters by direct interactions with regulatory proteins and serves as a scaffold for the assembly of a functional preinitiation complex with RNA polymerase II and the general transcription factors. This is Mediator of RNA polymerase II transcription subunit 22 (mdt-22) from Caenorhabditis elegans.